The primary structure comprises 435 residues: MRVFRGEVTTLPPDKSISHRAAMIAALSEGTTEITNFSAGFDNQSTLGVLRNAGIVVQQEEVQGAHGRTMRRVVITSNGLWSFTPPTAPLQCNNSGSTMRMMSGILAAQPFQCTLIGDASLMKRPMKRVADPLRQMGATIELSPDGTAPIHISGTKELRSLEYRLPVASAQVKSLIAFAALHAEGETRIIEPLQSRDHTEVMLGLETIVKKDERIIVVPGQQRIAAKPFFIPADPSAACFIIALGLLARGSEIVIRDVCLNPTRAAYLDLLAEAKAGIGVDNQRVIGGEIIGDILIDNLNGIEPLHISDPQLVAFIIDEIPMLAVLSAFATGSFELHNAAELRTKESDRIEALVVNLQRLGFACEQYPDGFVVKKRTEVPQGKVTIESFDDHRIAMSFAIAAQATGEALDISDIEVVGVSFPNFFSLLEELSSEA.

3-phosphoshikimate-binding residues include Lys15, Ser16, and Arg20. Lys15 serves as a coordination point for phosphoenolpyruvate. Residues Gly96 and Arg124 each contribute to the phosphoenolpyruvate site. Residues Ser169, Gln171, Ser195, Asp318, and Lys345 each coordinate 3-phosphoshikimate. Position 171 (Gln171) interacts with phosphoenolpyruvate. The Proton acceptor role is filled by Asp318. 2 residues coordinate phosphoenolpyruvate: Arg349 and Arg393.

The protein belongs to the EPSP synthase family. In terms of assembly, monomer.

It localises to the cytoplasm. The enzyme catalyses 3-phosphoshikimate + phosphoenolpyruvate = 5-O-(1-carboxyvinyl)-3-phosphoshikimate + phosphate. It functions in the pathway metabolic intermediate biosynthesis; chorismate biosynthesis; chorismate from D-erythrose 4-phosphate and phosphoenolpyruvate: step 6/7. Its function is as follows. Catalyzes the transfer of the enolpyruvyl moiety of phosphoenolpyruvate (PEP) to the 5-hydroxyl of shikimate-3-phosphate (S3P) to produce enolpyruvyl shikimate-3-phosphate and inorganic phosphate. The protein is 3-phosphoshikimate 1-carboxyvinyltransferase of Chlorobium chlorochromatii (strain CaD3).